A 151-amino-acid polypeptide reads, in one-letter code: Regulatory protein RecX (151 aa).

It belongs to the RecX family.

It is found in the cytoplasm. Its function is as follows. Modulates RecA activity. This is Regulatory protein RecX from Herminiimonas arsenicoxydans.